Reading from the N-terminus, the 494-residue chain is GTPase Der (494 aa).

EngA-type G domains lie at 2-164 (KKIA…PEED) and 235-407 (IKIS…KNYS). GTP is bound by residues 8–15 (GRPNVGKS), 55–59 (DTGGL), 116–119 (NKID), 241–248 (GRTNVGKS), 288–292 (DTAGL), and 352–355 (NKWD). Positions 408–492 (QHIKTSELNV…PVLFKAKKRG (85 aa)) constitute a KH-like domain.

It belongs to the TRAFAC class TrmE-Era-EngA-EngB-Septin-like GTPase superfamily. EngA (Der) GTPase family. In terms of assembly, associates with the 50S ribosomal subunit.

Its function is as follows. GTPase that plays an essential role in the late steps of ribosome biogenesis. The chain is GTPase Der from Sulfurimonas denitrificans (strain ATCC 33889 / DSM 1251) (Thiomicrospira denitrificans (strain ATCC 33889 / DSM 1251)).